Reading from the N-terminus, the 329-residue chain is DNA-directed RNA polymerase subunit alpha (329 aa).

The segment at 1-234 (MQGSVTEFLK…EQLDAFVELR (234 aa)) is alpha N-terminal domain (alpha-NTD). Positions 248–329 (FDPILLRPVD…WPPASLADDL (82 aa)) are alpha C-terminal domain (alpha-CTD).

It belongs to the RNA polymerase alpha chain family. As to quaternary structure, homodimer. The RNAP catalytic core consists of 2 alpha, 1 beta, 1 beta' and 1 omega subunit. When a sigma factor is associated with the core the holoenzyme is formed, which can initiate transcription.

It carries out the reaction RNA(n) + a ribonucleoside 5'-triphosphate = RNA(n+1) + diphosphate. Functionally, DNA-dependent RNA polymerase catalyzes the transcription of DNA into RNA using the four ribonucleoside triphosphates as substrates. The chain is DNA-directed RNA polymerase subunit alpha from Shewanella sp. (strain ANA-3).